Consider the following 302-residue polypeptide: Glycine--tRNA ligase alpha subunit (302 aa).

This sequence belongs to the class-II aminoacyl-tRNA synthetase family. In terms of assembly, tetramer of two alpha and two beta subunits.

The protein localises to the cytoplasm. The enzyme catalyses tRNA(Gly) + glycine + ATP = glycyl-tRNA(Gly) + AMP + diphosphate. The polypeptide is Glycine--tRNA ligase alpha subunit (Xanthomonas campestris pv. campestris (strain 8004)).